Here is a 443-residue protein sequence, read N- to C-terminus: MHDIKSIRDNPQAFDAGLARRGLKPLSASLLAIDERRRAAILASEQAQARRNAASKEIGDAKKAKDEARAATLMAEVAELKTTMPQLEAAAKAADEELTKELSAIPNIPFDEVPDGVDEHGNVQHHVFGNKRNYGFAPKLHDDLGNALGYMDFEAAAKLSGARFVVLKKGLARLERAIGQFMLDLHTTEHGYTEINPPLLVRNEVMFGTGQLPKFEDDQFWAIKGELLASPDHERLKTERLGLIPTAEVSLTNLARESILDEKQLPMRLTALTPCFRAEAGAAGRDTRGMIRQHQFTKVELVSITTPEASKDELERMLSCAEQVLQKLDLHYRVMTLCAGDMGFSSQKTYDIEVWMPGQGDGGMFREISSCSVCGDFQARRMDARSRGPDGKPRFVHTLNGSGTAVGRALIAVMETYQQEDGSIAVPSVLQPYMGGLKVISRD.

An L-serine-binding site is contributed by 246 to 248; that stretch reads TAE. 277-279 provides a ligand contact to ATP; that stretch reads RAE. Glu-300 contributes to the L-serine binding site. 367 to 370 lines the ATP pocket; it reads EISS. L-serine is bound at residue Ser-402.

Belongs to the class-II aminoacyl-tRNA synthetase family. Type-1 seryl-tRNA synthetase subfamily. Homodimer. The tRNA molecule binds across the dimer.

The protein localises to the cytoplasm. The catalysed reaction is tRNA(Ser) + L-serine + ATP = L-seryl-tRNA(Ser) + AMP + diphosphate + H(+). The enzyme catalyses tRNA(Sec) + L-serine + ATP = L-seryl-tRNA(Sec) + AMP + diphosphate + H(+). It functions in the pathway aminoacyl-tRNA biosynthesis; selenocysteinyl-tRNA(Sec) biosynthesis; L-seryl-tRNA(Sec) from L-serine and tRNA(Sec): step 1/1. Its function is as follows. Catalyzes the attachment of serine to tRNA(Ser). Is also able to aminoacylate tRNA(Sec) with serine, to form the misacylated tRNA L-seryl-tRNA(Sec), which will be further converted into selenocysteinyl-tRNA(Sec). This is Serine--tRNA ligase from Bradyrhizobium diazoefficiens (strain JCM 10833 / BCRC 13528 / IAM 13628 / NBRC 14792 / USDA 110).